A 150-amino-acid chain; its full sequence is Putative pre-16S rRNA nuclease (150 aa).

The protein belongs to the YqgF nuclease family.

Its subcellular location is the cytoplasm. Could be a nuclease involved in processing of the 5'-end of pre-16S rRNA. The polypeptide is Putative pre-16S rRNA nuclease (Protochlamydia amoebophila (strain UWE25)).